The chain runs to 186 residues: CoB--CoM heterodisulfide reductase iron-sulfur subunit C 2 (186 aa).

4Fe-4S ferredoxin-type domains follow at residues 26–56 and 67–99; these read GEDI…AYRT and LDDV…TEII. [4Fe-4S] cluster contacts are provided by cysteine 36, cysteine 39, cysteine 42, cysteine 46, cysteine 79, cysteine 82, cysteine 85, and cysteine 89.

This sequence belongs to the HdrC family. In terms of assembly, the heterodisulfide reductase is composed of three subunits; HdrA, HdrB and HdrC. [4Fe-4S] cluster serves as cofactor.

Its pathway is cofactor metabolism; coenzyme M-coenzyme B heterodisulfide reduction; coenzyme B and coenzyme M from coenzyme M-coenzyme B heterodisulfide: step 1/1. Part of a complex that catalyzes the reversible reduction of CoM-S-S-CoB to the thiol-coenzymes H-S-CoM (coenzyme M) and H-S-CoB (coenzyme B). The chain is CoB--CoM heterodisulfide reductase iron-sulfur subunit C 2 (hdrC2) from Methanocaldococcus jannaschii (strain ATCC 43067 / DSM 2661 / JAL-1 / JCM 10045 / NBRC 100440) (Methanococcus jannaschii).